The chain runs to 1233 residues: Rho guanine nucleotide exchange factor 10-like protein (1233 aa).

The span at 1–10 (MASSNPPPQP) shows a compositional bias: pro residues. Residues 1-93 (MASSNPPPQP…GTGVPAWVSN (93 aa)) are disordered. Acidic residues predominate over residues 26–46 (EAEDDPGEAFEFDDSDDEEDT). Ser40 is subject to Phosphoserine. The segment covering 72–89 (PVTDPDPAAAPPGTGVPA) has biased composition (low complexity). Residues Tyr131 and Tyr152 each carry the phosphotyrosine modification. Positions 159-193 (GAPRQAEDLGWSSSEFESYSEDSGEEAKPEVEPAK) are disordered. A compositionally biased stretch (basic and acidic residues) spans 183–193 (EEAKPEVEPAK). The residue at position 240 (Ser240) is a Phosphoserine. In terms of domain architecture, DH spans 275–462 (VRRHILGSIV…ETLAEKLNEQ (188 aa)). The span at 1089–1104 (QEEAEGPRAEEEKPDG) shows a compositional bias: basic and acidic residues. Disordered stretches follow at residues 1089–1117 (QEEA…HVGR) and 1140–1161 (PLLS…SEED).

Interacts with RHOA, RHOB and RHOC.

It localises to the cytoplasm. In terms of biological role, acts as a guanine nucleotide exchange factor (GEF) for RHOA, RHOB and RHOC. This Pongo abelii (Sumatran orangutan) protein is Rho guanine nucleotide exchange factor 10-like protein (ARHGEF10L).